Here is a 183-residue protein sequence, read N- to C-terminus: NRR repressor homolog 1 (183 aa).

Disordered regions lie at residues 1–40 and 66–183; these read MEGVDVKAPRPGCGGDDGGAAAASLSARREEEEEGAVVGG and NGEE…PTDQ. Residues 31–40 are compositionally biased toward acidic residues; it reads EEEEGAVVGG. Over residues 70 to 79 the composition is skewed to gly residues; the sequence is GAAGGDGDGA. Over residues 101–115 the composition is skewed to acidic residues; sequence FEFEEAAAGAGDDDA. The segment covering 135–145 has biased composition (basic and acidic residues); that stretch reads AVEKRRTEKEA. Residues 150–161 show a composition bias toward acidic residues; that stretch reads AEDDDDEQEGGE. Positions 163–183 are enriched in basic and acidic residues; the sequence is VEGKEEHRPGRRVEAHGPTDQ.

This sequence belongs to the NPR1-interactor family. As to quaternary structure, interacts with NPR1/NH1. Interacts with NPR3/NH3.

It localises to the nucleus. Its function is as follows. Binds to and represses NPR1/NH1-mediated transcriptional activation of LG2 in vitro. This is NRR repressor homolog 1 from Oryza sativa subsp. japonica (Rice).